Here is a 391-residue protein sequence, read N- to C-terminus: MIGTPYTEGARRAMLLGCGELGKEVAIELQRLGVEVIGVDRYPNAPAMQIAHRSHVINMLDAKALRAVIELEKPHLVIPEIEAIATQTLVEMEAEGLNVVPTARATKLTMDREGIRRLAAETLGLPTSPYFFCDTETEFNQAISKIGVPCVVKPVMSSSGKGQSVIRNVAQSAKAWQYAQEGGRAGGGRVIVEGFIPFDYEITLLTISAVNGIHFCAPIGHRQEDGDYRESWQPQAMSADVLAKSQAIASKVVEALGGYGLFGVELFVKGSDVYFSEVSPRPHDTGLVTLISQDLSEFALHVRAILGLPIPNIHQHGPSASAVVLVEGKSKNIRYQGLAAALAAENTQLRLFAKPEIDGRRRLGVALARDKDIDSAVNKALDSAAKVQVIF.

Residues 20-21 (EL) and Glu80 contribute to the N(1)-(5-phospho-beta-D-ribosyl)glycinamide site. Residues Arg112, Lys153, 158–163 (SSGKGQ), 193–196 (EGFI), and Glu201 each bind ATP. An ATP-grasp domain is found at 117 to 306 (RLAAETLGLP…EFALHVRAIL (190 aa)). Mg(2+)-binding residues include Glu265 and Glu277. N(1)-(5-phospho-beta-D-ribosyl)glycinamide contacts are provided by residues Asp284, Lys354, and 361–362 (RR).

Belongs to the PurK/PurT family. In terms of assembly, homodimer.

The enzyme catalyses N(1)-(5-phospho-beta-D-ribosyl)glycinamide + formate + ATP = N(2)-formyl-N(1)-(5-phospho-beta-D-ribosyl)glycinamide + ADP + phosphate + H(+). It functions in the pathway purine metabolism; IMP biosynthesis via de novo pathway; N(2)-formyl-N(1)-(5-phospho-D-ribosyl)glycinamide from N(1)-(5-phospho-D-ribosyl)glycinamide (formate route): step 1/1. In terms of biological role, involved in the de novo purine biosynthesis. Catalyzes the transfer of formate to 5-phospho-ribosyl-glycinamide (GAR), producing 5-phospho-ribosyl-N-formylglycinamide (FGAR). Formate is provided by PurU via hydrolysis of 10-formyl-tetrahydrofolate. This is Formate-dependent phosphoribosylglycinamide formyltransferase from Shewanella oneidensis (strain ATCC 700550 / JCM 31522 / CIP 106686 / LMG 19005 / NCIMB 14063 / MR-1).